Here is a 432-residue protein sequence, read N- to C-terminus: D-amino acid dehydrogenase (432 aa).

3 to 17 (VLVLGSGVIGTASAY) serves as a coordination point for FAD.

The protein belongs to the DadA oxidoreductase family. FAD is required as a cofactor.

The catalysed reaction is a D-alpha-amino acid + A + H2O = a 2-oxocarboxylate + AH2 + NH4(+). It participates in amino-acid degradation; D-alanine degradation; NH(3) and pyruvate from D-alanine: step 1/1. Functionally, oxidative deamination of D-amino acids. In Ectopseudomonas mendocina (strain ymp) (Pseudomonas mendocina), this protein is D-amino acid dehydrogenase.